Reading from the N-terminus, the 218-residue chain is Small ribosomal subunit protein uS7 (218 aa).

This sequence belongs to the universal ribosomal protein uS7 family. Part of the 30S ribosomal subunit.

Its function is as follows. One of the primary rRNA binding proteins, it binds directly to 16S rRNA where it nucleates assembly of the head domain of the 30S subunit. Is located at the subunit interface close to the decoding center. This chain is Small ribosomal subunit protein uS7 (rps7), found in Pyrococcus horikoshii (strain ATCC 700860 / DSM 12428 / JCM 9974 / NBRC 100139 / OT-3).